Here is a 267-residue protein sequence, read N- to C-terminus: Translation initiation factor 2 subunit alpha (267 aa).

Residues 10–81 form the S1 motif domain; the sequence is GELVVGKVDD…SAQQIDLSLK (72 aa).

The protein belongs to the eIF-2-alpha family. Heterotrimer composed of an alpha, a beta and a gamma chain.

EIF-2 functions in the early steps of protein synthesis by forming a ternary complex with GTP and initiator tRNA. This is Translation initiation factor 2 subunit alpha from Halobacterium salinarum (strain ATCC 29341 / DSM 671 / R1).